An 87-amino-acid chain; its full sequence is Small ribosomal subunit protein eS21 (87 aa).

Met-1 carries the post-translational modification N-acetylmethionine.

The protein belongs to the eukaryotic ribosomal protein eS21 family. Component of the small ribosomal subunit (SSU). Mature yeast ribosomes consist of a small (40S) and a large (60S) subunit. The 40S small subunit contains 1 molecule of ribosomal RNA (18S rRNA) and at least 33 different proteins. The large 60S subunit contains 3 rRNA molecules (25S, 5.8S and 5S rRNA) and at least 46 different proteins. Interacts with uS2A and uS2B, strongest interaction is with uS2B.

It is found in the cytoplasm. Its subcellular location is the nucleus. Its function is as follows. Component of the ribosome, a large ribonucleoprotein complex responsible for the synthesis of proteins in the cell. The small ribosomal subunit (SSU) binds messenger RNAs (mRNAs) and translates the encoded message by selecting cognate aminoacyl-transfer RNA (tRNA) molecules. The large subunit (LSU) contains the ribosomal catalytic site termed the peptidyl transferase center (PTC), which catalyzes the formation of peptide bonds, thereby polymerizing the amino acids delivered by tRNAs into a polypeptide chain. The nascent polypeptides leave the ribosome through a tunnel in the LSU and interact with protein factors that function in enzymatic processing, targeting, and the membrane insertion of nascent chains at the exit of the ribosomal tunnel. eS21 is required for the processing of the 20S rRNA-precursor to mature 18S rRNA in a late step of the maturation of 40S ribosomal subunits. Has a physiological role leading to 18S rRNA stability. This is Small ribosomal subunit protein eS21 (rps21) from Schizosaccharomyces pombe (strain 972 / ATCC 24843) (Fission yeast).